Consider the following 946-residue polypeptide: Bifunctional glutamine synthetase adenylyltransferase/adenylyl-removing enzyme (946 aa).

The tract at residues 1-440 is adenylyl removase; the sequence is MKPLSSPLQQ…VFNELIGDDE (440 aa). An adenylyl transferase region spans residues 449 to 946; it reads SEQWRELWQD…ASWQKWLVEE (498 aa).

Belongs to the GlnE family. Requires Mg(2+) as cofactor.

It carries out the reaction [glutamine synthetase]-O(4)-(5'-adenylyl)-L-tyrosine + phosphate = [glutamine synthetase]-L-tyrosine + ADP. The catalysed reaction is [glutamine synthetase]-L-tyrosine + ATP = [glutamine synthetase]-O(4)-(5'-adenylyl)-L-tyrosine + diphosphate. In terms of biological role, involved in the regulation of glutamine synthetase GlnA, a key enzyme in the process to assimilate ammonia. When cellular nitrogen levels are high, the C-terminal adenylyl transferase (AT) inactivates GlnA by covalent transfer of an adenylyl group from ATP to specific tyrosine residue of GlnA, thus reducing its activity. Conversely, when nitrogen levels are low, the N-terminal adenylyl removase (AR) activates GlnA by removing the adenylyl group by phosphorolysis, increasing its activity. The regulatory region of GlnE binds the signal transduction protein PII (GlnB) which indicates the nitrogen status of the cell. This Shigella boydii serotype 4 (strain Sb227) protein is Bifunctional glutamine synthetase adenylyltransferase/adenylyl-removing enzyme.